Here is a 563-residue protein sequence, read N- to C-terminus: Methylcrotonoyl-CoA carboxylase beta chain, mitochondrial (563 aa).

The transit peptide at 1–22 (MWGALRSALRPCCRAAVPPQRA) directs the protein to the mitochondrion. The region spanning 49–306 (MKALVSQLHE…QKKMDVTIEP (258 aa)) is the CoA carboxyltransferase N-terminal domain. The tract at residues 49 to 555 (MKALVSQLHE…SAALNAPIQR (507 aa)) is carboxyltransferase. Lys-70 is modified (N6-acetyllysine; alternate). Lys-70 is modified (N6-succinyllysine; alternate). Lys-141 carries the post-translational modification N6-succinyllysine. One can recognise a CoA carboxyltransferase C-terminal domain in the interval 309–555 (EPLFPADELY…SAALNAPIQR (247 aa)). An acyl-CoA binding region spans residues 343–372 (RFNEFKALYGDTLVTGFARIFGYPVGIIGN). Lys-433 bears the N6-succinyllysine mark. An N6-acetyllysine; alternate modification is found at Lys-495. An N6-succinyllysine; alternate modification is found at Lys-495. Position 511 is an N6-acetyllysine (Lys-511).

The protein belongs to the AccD/PCCB family. As to quaternary structure, probably a dodecamer composed of six biotin-containing alpha subunits (MCCC1) and six beta (MCCC2) subunits.

The protein localises to the mitochondrion matrix. The catalysed reaction is 3-methylbut-2-enoyl-CoA + hydrogencarbonate + ATP = 3-methyl-(2E)-glutaconyl-CoA + ADP + phosphate + H(+). It participates in amino-acid degradation; L-leucine degradation; (S)-3-hydroxy-3-methylglutaryl-CoA from 3-isovaleryl-CoA: step 2/3. Carboxyltransferase subunit of the 3-methylcrotonyl-CoA carboxylase, an enzyme that catalyzes the conversion of 3-methylcrotonyl-CoA to 3-methylglutaconyl-CoA, a critical step for leucine and isovaleric acid catabolism. The chain is Methylcrotonoyl-CoA carboxylase beta chain, mitochondrial (Mccc2) from Mus musculus (Mouse).